The following is a 200-amino-acid chain: Recombination protein RecR (200 aa).

The C4-type zinc finger occupies 59–74 (CDICGNVCESSPCPVC). The Toprim domain maps to 82-177 (SVICVVEEPK…KVTRLASGLP (96 aa)).

This sequence belongs to the RecR family.

In terms of biological role, may play a role in DNA repair. It seems to be involved in an RecBC-independent recombinational process of DNA repair. It may act with RecF and RecO. The chain is Recombination protein RecR from Bifidobacterium longum (strain DJO10A).